A 759-amino-acid chain; its full sequence is GTPase-activating protein rrc-1 (759 aa).

Residues 164–243 (PAIAAAVVTK…PRDCVMLIDD (80 aa)) form the SH3 domain. One can recognise a Rho-GAP domain in the interval 280–473 (LELTDLYMRT…FFIENSESLF (194 aa)). Residues 591–624 (ARSMRPTSRPPPSPRTRRARFSNGSSNNVQKLNE) are disordered. Over residues 612–622 (SNGSSNNVQKL) the composition is skewed to polar residues.

Expressed in coelomocytes, excretory cells, uterine-seam cells and GLR cells.

In terms of biological role, functions as a GTPase-activating protein (GAP) for ced-10/rac-1 and CDC42. This Caenorhabditis elegans protein is GTPase-activating protein rrc-1 (rrc-1).